We begin with the raw amino-acid sequence, 200 residues long: Adenylate kinase (200 aa).

Residue 10-15 (GAGKGT) participates in ATP binding. The tract at residues 30 to 59 (STGDMLRAAVAAETPVGLEAKAIMESGGLV) is NMP. AMP-binding positions include T31, R36, 57-59 (GLV), 85-88 (GFPR), and Q92. The segment at 126–142 (KRAEETAARGQPVRKDD) is LID. Residue R127 participates in ATP binding. Positions 139 and 150 each coordinate AMP. K178 provides a ligand contact to ATP.

Belongs to the adenylate kinase family. Monomer.

The protein resides in the cytoplasm. The enzyme catalyses AMP + ATP = 2 ADP. The protein operates within purine metabolism; AMP biosynthesis via salvage pathway; AMP from ADP: step 1/1. Its function is as follows. Catalyzes the reversible transfer of the terminal phosphate group between ATP and AMP. Plays an important role in cellular energy homeostasis and in adenine nucleotide metabolism. This Methylorubrum extorquens (strain CM4 / NCIMB 13688) (Methylobacterium extorquens) protein is Adenylate kinase.